A 186-amino-acid polypeptide reads, in one-letter code: Adenylate kinase isoenzyme 6 homolog (186 aa).

Positions 15, 17, 18, 19, and 20 each coordinate ATP. The NMPbind stretch occupies residues 48–71 (NLSNIIKDERLYKEFDDELDASIY). The LID stretch occupies residues 126-136 (KRNYTKEKIKN). Position 127 (R127) interacts with ATP.

Belongs to the adenylate kinase family. AK6 subfamily. As to quaternary structure, monomer and homodimer. Interacts with small ribosomal subunit protein uS11. Not a structural component of 43S pre-ribosomes, but transiently interacts with them by binding to uS11.

The protein localises to the cytoplasm. Its subcellular location is the nucleus. It carries out the reaction AMP + ATP = 2 ADP. The catalysed reaction is ATP + H2O = ADP + phosphate + H(+). Broad-specificity nucleoside monophosphate (NMP) kinase that catalyzes the reversible transfer of the terminal phosphate group between nucleoside triphosphates and monophosphates. Also has ATPase activity. Involved in the late cytoplasmic maturation steps of the 40S ribosomal particles, specifically 18S rRNA maturation. While NMP activity is not required for ribosome maturation, ATPase activity is. Associates transiently with small ribosomal subunit protein uS11. ATP hydrolysis breaks the interaction with uS11. May temporarily remove uS11 from the ribosome to enable a conformational change of the ribosomal RNA that is needed for the final maturation step of the small ribosomal subunit. Its NMP activity may have a role in nuclear energy homeostasis. The polypeptide is Adenylate kinase isoenzyme 6 homolog (Plasmodium falciparum (isolate 3D7)).